Consider the following 438-residue polypeptide: UDP-N-acetylmuramoylalanine--D-glutamate ligase (438 aa).

112–118 (GSNGKST) contributes to the ATP binding site.

Belongs to the MurCDEF family.

It localises to the cytoplasm. The catalysed reaction is UDP-N-acetyl-alpha-D-muramoyl-L-alanine + D-glutamate + ATP = UDP-N-acetyl-alpha-D-muramoyl-L-alanyl-D-glutamate + ADP + phosphate + H(+). The protein operates within cell wall biogenesis; peptidoglycan biosynthesis. Functionally, cell wall formation. Catalyzes the addition of glutamate to the nucleotide precursor UDP-N-acetylmuramoyl-L-alanine (UMA). The polypeptide is UDP-N-acetylmuramoylalanine--D-glutamate ligase (Salmonella choleraesuis (strain SC-B67)).